A 410-amino-acid polypeptide reads, in one-letter code: ACT domain-containing protein ACR10 (410 aa).

ACT domains lie at 22–105, 114–197, and 245–324; these read VITI…SESQ, LLKL…LVGP, and LIHI…VVMM.

May bind amino acids. The protein is ACT domain-containing protein ACR10 of Arabidopsis thaliana (Mouse-ear cress).